The following is a 158-amino-acid chain: MTDKDSNLGADQSEDVTVETTSVFRADFLNELDAPAAAGTEGAVSGVEGLPSGSALLVVKRGPNAGSRFLLDQPTTSAGRHPDSDIFLDDVTVSRRHAEFRLEGGEFQVVDVGSLNGTYVNREPVDSAVLANGDEVQIGKFRLVFLTGPKSDDSGSNA.

T20 is subject to Phosphothreonine; by PknG. Residue T21 is modified to Phosphothreonine; by PknB. One can recognise an FHA domain in the interval 76-125 (TSAGRHPDSDIFLDDVTVSRRHAEFRLEGGEFQVVDVGSLNGTYVNREPV).

Monomer. Binds via its FHA domain to Kgd, Gdh, and the N-terminal region of PknG. In terms of processing, phosphorylated on Thr-21 by PknB. Phosphorylated on Thr-20 by PknG. Phosphorylation at either Thr-20 or Thr-21 prevents binding to target enzymes.

Functionally, involved in regulation of glutamate metabolism. Acts as a phosphorylation-dependent molecular switch that modulates the activities of Kgd and Gdh. This Mycolicibacterium smegmatis (strain ATCC 700084 / mc(2)155) (Mycobacterium smegmatis) protein is Glycogen accumulation regulator GarA (garA).